A 266-amino-acid polypeptide reads, in one-letter code: 4-hydroxy-tetrahydrodipicolinate reductase (266 aa).

Residue G10–M15 coordinates NAD(+). K38 contacts NADP(+). Residues G99–T101 and A125–F128 contribute to the NAD(+) site. H155 functions as the Proton donor/acceptor in the catalytic mechanism. Position 156 (H156) interacts with (S)-2,3,4,5-tetrahydrodipicolinate. K159 acts as the Proton donor in catalysis. G165–T166 contacts (S)-2,3,4,5-tetrahydrodipicolinate.

This sequence belongs to the DapB family.

It is found in the cytoplasm. It catalyses the reaction (S)-2,3,4,5-tetrahydrodipicolinate + NAD(+) + H2O = (2S,4S)-4-hydroxy-2,3,4,5-tetrahydrodipicolinate + NADH + H(+). It carries out the reaction (S)-2,3,4,5-tetrahydrodipicolinate + NADP(+) + H2O = (2S,4S)-4-hydroxy-2,3,4,5-tetrahydrodipicolinate + NADPH + H(+). It functions in the pathway amino-acid biosynthesis; L-lysine biosynthesis via DAP pathway; (S)-tetrahydrodipicolinate from L-aspartate: step 4/4. Its function is as follows. Catalyzes the conversion of 4-hydroxy-tetrahydrodipicolinate (HTPA) to tetrahydrodipicolinate. The polypeptide is 4-hydroxy-tetrahydrodipicolinate reductase (Bacillus cytotoxicus (strain DSM 22905 / CIP 110041 / 391-98 / NVH 391-98)).